The sequence spans 556 residues: Polypeptide N-acetylgalactosaminyltransferase 13 (556 aa).

Residues 1–4 (MRRF) are Cytoplasmic-facing. Residues 5–27 (VYCKVVLATSLMWVLVDVFLLLY) form a helical; Signal-anchor for type II membrane protein membrane-spanning segment. At 28 to 556 (FSECNKCDDK…WLLRNMTLGT (529 aa)) the chain is on the lumenal side. N-linked (GlcNAc...) asparagine glycosylation is found at Asn-94 and Asn-116. Intrachain disulfides connect Cys-105/Cys-338, Cys-329/Cys-407, Cys-441/Cys-458, Cys-481/Cys-496, and Cys-522/Cys-539. The catalytic subdomain A stretch occupies residues 114-224 (LPNTSVVIVF…LGWLEPLLAR (111 aa)). Substrate-binding residues include Asp-155 and Arg-185. 2 residues coordinate Mn(2+): Asp-208 and His-210. The segment at 284-346 (PVRTPTMAGG…TCSHVGHVFR (63 aa)) is catalytic subdomain B. Trp-315 is a substrate binding site. His-343 contacts Mn(2+). Arg-346 and Tyr-351 together coordinate substrate. Residues 428-550 (YSLGEIRNVE…GSRSQQWLLR (123 aa)) form the Ricin B-type lectin domain. The N-linked (GlcNAc...) asparagine glycan is linked to Asn-551.

It belongs to the glycosyltransferase 2 family. GalNAc-T subfamily. Mn(2+) serves as cofactor. As to expression, specifically expressed in neuronal cells. Not expressed in glial cells such as astrocytes. Expressed at low level.

The protein resides in the golgi apparatus membrane. It catalyses the reaction L-seryl-[protein] + UDP-N-acetyl-alpha-D-galactosamine = a 3-O-[N-acetyl-alpha-D-galactosaminyl]-L-seryl-[protein] + UDP + H(+). It carries out the reaction L-threonyl-[protein] + UDP-N-acetyl-alpha-D-galactosamine = a 3-O-[N-acetyl-alpha-D-galactosaminyl]-L-threonyl-[protein] + UDP + H(+). It functions in the pathway protein modification; protein glycosylation. In terms of biological role, catalyzes the initial reaction in O-linked oligosaccharide biosynthesis, the transfer of an N-acetyl-D-galactosamine (GalNAc) residue from UDP-GalNAc to a serine or threonine residue on the protein receptor. Generates GalNAc-O-Ser/Thr structure also known as Tn antigen, which itself is immunogenic but also serves as a precursor for the synthesis of different mucin-type O-glycan core structures. Contributes to the synthesis of O-linked glycans on mucins and proteoglycans of the central nervous system. Can glycosylate both unmodified peptides and glycopeptides that already contain an O-linked GalNAc sugar. Transfers GalNAc to Thr-/Ser-rich tandem repeats GTTPSPVPTTSTTSAP of MUC5AC. Transfers GalNAc to three consecutive serine/threonine residues on SDC3 forming a triplet-Tn epitope expressed in Purkinje cells of the developing brain. May promote neurogenesis through glycosylation and stabilization of PDPN. This Mus musculus (Mouse) protein is Polypeptide N-acetylgalactosaminyltransferase 13 (Galnt13).